The sequence spans 904 residues: Myelin regulatory factor-like protein (904 aa).

A disordered region spans residues 46 to 132; sequence LQRQLPDTPP…ATCRHQTGPS (87 aa). Over residues 100 to 117 the composition is skewed to polar residues; that stretch reads PSQSMAGQTHSSFQNGYP. A DNA-binding region (NDT80) is located at residues 108-400; it reads THSSFQNGYP…SNPGQFENDS (293 aa). One can recognise a Peptidase S74 domain in the interval 446-554; it reads SDSRVKENIQ…KLTNNLEERI (109 aa). A coiled-coil region spans residues 538 to 575; the sequence is GAVKQLCKLTNNLEERIEELEIWNKKLARLKRLSSSWK. A helical transmembrane segment spans residues 624–644; the sequence is LVVVLIAVMAFCALTIVALYI. Positions 656-688 are disordered; that stretch reads NLPLSNMTSSPEPALSSTAPTSAPHTTPETTQT. Over residues 663-688 the composition is skewed to low complexity; sequence TSSPEPALSSTAPTSAPHTTPETTQT.

This sequence belongs to the MRF family.

The protein resides in the membrane. The protein is Myelin regulatory factor-like protein (Myrfl) of Mus musculus (Mouse).